A 550-amino-acid chain; its full sequence is MTPADLAELLRGTAAKVLAERGLDVSVLPETLTVERPRNPEHGDYATNVAMQVAKKVGTNPRELAGWLADALTAAEGIDSADIAGPGFLNIRLAADAQGAIVAKILEAGAAFGAGHTLDGKKINLEFVSANPTGPIHLGGTRWAAVGDALGRILSTQGAAVTREYYFNDHGAQIDRFSRSLIAAAKGEPAPEDGYAGAYIADIAAQVQQQRPDVLDLPAGEQQEVFRSIGVDLMFAHIKRTLHEFGVDFDVYFHENSLFESGAVEKAVETLKDSGNLFQEDGAWWLKSTDFGDDKDRVVIKSDGNAAYIAGDIAYFQDKRSRGFDLCIYMLGADHHGYIGRLKAAAAAFGDDPDTVEVLIGQMVNLVRDGVAVKMSKRAGTVITLDDLVEAIGVDASRYAMIRSSVDSSIDIDLELWTSTGNENPVYYVQYAHARLSAIARNAADLGIAVTDPDFSLLIAEQEGDLIRTLGEYPRVVTSAANLREPHRIARYLEELAGAYHRFYGACRILPQGDEEVGPLHIARLALCDASRQVLANGLALLGVSAPEQM.

Residues 130-140 carry the 'HIGH' region motif; it reads ANPTGPIHLGG.

It belongs to the class-I aminoacyl-tRNA synthetase family. As to quaternary structure, monomer.

It localises to the cytoplasm. It carries out the reaction tRNA(Arg) + L-arginine + ATP = L-arginyl-tRNA(Arg) + AMP + diphosphate. This Rhodococcus opacus (strain B4) protein is Arginine--tRNA ligase.